The chain runs to 132 residues: Pre-histone-like nucleoprotein (132 aa).

Positions 2 to 23 are excised as a propeptide; that stretch reads AILISPSNNTGWGLGTHKLFGG. The Nuclear localization signal motif lies at 124–132; sequence RRKRRVRSK.

This sequence belongs to the adenoviridae histone-like nucleoprotein family. As to quaternary structure, interacts with the core-capsid bridging protein; this interaction bridges the virus core to the capsid. Interacts with host NPM1; this interaction might play a role in placing the pre-histone-like nucleoprotein on the viral DNA or regulating viral gene expression. Interacts with host HMGB1; this interaction inhibits host immune response. Cleaved near the N-terminus by the viral protease during virion maturation to form the mature protein.

The protein resides in the virion. Its subcellular location is the host nucleus. It is found in the host nucleolus. Plays a role in the inhibition of host immune response within the nucleus. Interacts with cellular nucleosomes and immobilizes the host immune danger signal HMGB1 on chromatin. In turn, prevents HMGB1 release out of the cell and thus decreases inflammation. Also plays a role in the wrapping and condensation of the viral DNA. May also promote viral genome import into the nucleus. This chain is Pre-histone-like nucleoprotein, found in Canine adenovirus serotype 1 (strain RI261) (CAdV-1).